We begin with the raw amino-acid sequence, 302 residues long: Probable alpha-L-glutamate ligase (302 aa).

The ATP-grasp domain maps to 105-288 (LQLLARKGIP…LAGKIIEYIE (184 aa)). ATP contacts are provided by residues Lys-142, 179-180 (EF), Asp-188, and 212-214 (RAN). 3 residues coordinate Mg(2+): Asp-249, Glu-261, and Asn-263. The Mn(2+) site is built by Asp-249, Glu-261, and Asn-263.

It belongs to the RimK family. The cofactor is Mg(2+). Requires Mn(2+) as cofactor.

In Legionella pneumophila (strain Paris), this protein is Probable alpha-L-glutamate ligase.